The following is a 588-amino-acid chain: Zeta-carotene desaturase, chloroplastic/chromoplastic (588 aa).

Residues 1–49 (MATCSAYLCCPATSASLKKRVFPDGSAGFLFFGGRRLSNRLVTPKSVIR) constitute a chloroplast and chromoplast transit peptide.

Belongs to the zeta carotene desaturase family. As to quaternary structure, monomer and dimer. Requires decylplastoquinone as cofactor. The cofactor is 6-decylubiquinone.

It localises to the plastid. Its subcellular location is the chloroplast. The protein resides in the chromoplast. The enzyme catalyses 9,9'-di-cis-zeta-carotene + 2 a quinone = 7,7',9,9'-tetra-cis-lycopene + 2 a quinol. It participates in carotenoid biosynthesis; lycopene biosynthesis. Its function is as follows. Catalyzes the conversion of zeta-carotene to lycopene via the intermediary of neurosporene. It carries out two consecutive desaturations (introduction of double bonds) at positions C-7 and C-7'. Shows stereoselectivity toward trans C15-C15'zeta-carotene double bond. The zeta-carotene produced by the phytoene desaturase PDS has a C15-C15' double bond in the cis configuration and it requires isomerization before being recognized as substrate by ZDS. No activity with all-trans-zeta-carotene. The main product is 7,9,7',9'-tetra-cis-lycopene (pro-lycopene). The sequence is that of Zeta-carotene desaturase, chloroplastic/chromoplastic (ZDS) from Capsicum annuum (Capsicum pepper).